The following is a 156-amino-acid chain: Small ribosomal subunit protein uS7 (156 aa).

This sequence belongs to the universal ribosomal protein uS7 family. As to quaternary structure, part of the 30S ribosomal subunit. Contacts proteins S9 and S11.

One of the primary rRNA binding proteins, it binds directly to 16S rRNA where it nucleates assembly of the head domain of the 30S subunit. Is located at the subunit interface close to the decoding center, probably blocks exit of the E-site tRNA. The protein is Small ribosomal subunit protein uS7 of Brucella melitensis biotype 1 (strain ATCC 23456 / CCUG 17765 / NCTC 10094 / 16M).